A 136-amino-acid polypeptide reads, in one-letter code: uncharacterized protein (136 aa).

A helical transmembrane segment spans residues 19–39 (LGFPLGTALLLIIIFSLSGIF). Disordered regions lie at residues 54–87 (SLAN…LSVP) and 112–136 (KLTV…VPLY).

It is found in the membrane. This is an uncharacterized protein from Arabidopsis thaliana (Mouse-ear cress).